Consider the following 187-residue polypeptide: Peptidyl-tRNA hydrolase (187 aa).

Y15 is a binding site for tRNA. The Proton acceptor role is filled by H20. TRNA contacts are provided by F64, N66, and N112.

Belongs to the PTH family. In terms of assembly, monomer.

The protein localises to the cytoplasm. It catalyses the reaction an N-acyl-L-alpha-aminoacyl-tRNA + H2O = an N-acyl-L-amino acid + a tRNA + H(+). In terms of biological role, hydrolyzes ribosome-free peptidyl-tRNAs (with 1 or more amino acids incorporated), which drop off the ribosome during protein synthesis, or as a result of ribosome stalling. Catalyzes the release of premature peptidyl moieties from peptidyl-tRNA molecules trapped in stalled 50S ribosomal subunits, and thus maintains levels of free tRNAs and 50S ribosomes. This chain is Peptidyl-tRNA hydrolase, found in Parabacteroides distasonis (strain ATCC 8503 / DSM 20701 / CIP 104284 / JCM 5825 / NCTC 11152).